Here is a 313-residue protein sequence, read N- to C-terminus: MEAAVLRVKRKRGADPADALILSCKRIRTEDETKESSAVTTQVFRLAATVKSENEPLHKYVREAISRNQSCLTLRPSSESKQRIQEELRASKEAERQVSRYRIISSHRPNSEEDNVGASHLIGCSSQDVPSETQDEAEATEATKSHISSPFQLFDMVQEEPEQKYLEKDSEPETILCNSIKMIREHLTVSEAGQESEHREYVDEYVYDIYYSEASQHGWIQDILYVQPYTEEQELVSEEPEPEEIYEDEDDENEENNWRNDYPDEEDSDREERYIGYYEDGDEEEKSAGHAWKMYHRSSLREIGDDDENADLY.

3 disordered regions span residues 76-96, 127-151, and 232-272; these read PSSE…EAER, QDVP…SSPF, and EQEL…DREE. The segment covering 78-96 has biased composition (basic and acidic residues); that stretch reads SESKQRIQEELRASKEAER. Residues 232–255 are compositionally biased toward acidic residues; sequence EQELVSEEPEPEEIYEDEDDENEE.

It belongs to the IWR1/SLC7A6OS family.

It localises to the cytoplasm. The protein resides in the nucleus. Directs RNA polymerase II nuclear import. The polypeptide is Probable RNA polymerase II nuclear localization protein SLC7A6OS (slc7a6os) (Xenopus laevis (African clawed frog)).